Consider the following 113-residue polypeptide: Endoribonuclease SymE (113 aa).

The region spanning 29–74 (GRYPDYSRIPAITLKGQWLEVAGFATGTAVDVKVMEGCIVLTAQPP) is the SpoVT-AbrB domain.

Belongs to the SymE family.

It is found in the cytoplasm. Functionally, involved in the degradation and recycling of damaged RNA. It is itself a target for degradation by the ATP-dependent protease Lon. This Escherichia coli O7:K1 (strain IAI39 / ExPEC) protein is Endoribonuclease SymE.